Here is a 546-residue protein sequence, read N- to C-terminus: MTKFIFVTGGVVSSIGKGIVAASLGRLLKSRGYSVSILKLDPYINVDPGTMSPYQHGEVFVTADGAETDLDLGHYERFTDTPMSRLNSVTTGSIYQAVINKERRGDYNGGTVQVIPHITAEIRDRIHRVAQDTHPDVVITEIGGTVGDIESLPFLEAIRQFRKDVGRRDLAYIHVTLVPWIPSAGEMKTKPTQHSVKELRSIGIQPDILVCRCDRPLQAGMKEKMSEFCNVSPEAVITSQDASSIYEVPLMLEREGLAEQVLDILQLEQRQPDLTQWQRWVHQLQNPSRRVEVAIVGKYVRLNDAYLSVSESLRHAAASADADLQLRWVDAEDLENGDPATYLDGVDGIVVPGGFGARGVDGKVAAIQFARDHQIPFLGLCLGMQAAVIDWARNVAGLDGANSAEFDPETPHPVIALLPEQQDVVDLGGTMRLGLCPCKIQSGSLAQRLYGEDIIYERHRHRYEFNNAYRSLFLESGYCVSGTSPDSRLVEIVERPDHPFFIACQFHPEFVSRPNHPHPLFQGLIKAALGSDLTLVDPAPLPAETV.

Positions 1-267 (MTKFIFVTGG…AEQVLDILQL (267 aa)) are amidoligase domain. Serine 13 contacts CTP. Serine 13 contacts UTP. Residue 14-19 (SIGKGI) participates in ATP binding. Residue tyrosine 54 coordinates L-glutamine. Aspartate 71 lines the ATP pocket. The Mg(2+) site is built by aspartate 71 and glutamate 141. CTP is bound by residues 148–150 (DIE), 188–193 (KTKPTQ), and lysine 224. UTP-binding positions include 188 to 193 (KTKPTQ) and lysine 224. Residues 292–534 (EVAIVGKYVR…IKAALGSDLT (243 aa)) form the Glutamine amidotransferase type-1 domain. Glycine 354 is an L-glutamine binding site. Cysteine 381 functions as the Nucleophile; for glutamine hydrolysis in the catalytic mechanism. Residues 382 to 385 (LGMQ), glutamate 405, and arginine 462 each bind L-glutamine. Catalysis depends on residues histidine 507 and glutamate 509.

It belongs to the CTP synthase family. Homotetramer.

It carries out the reaction UTP + L-glutamine + ATP + H2O = CTP + L-glutamate + ADP + phosphate + 2 H(+). It catalyses the reaction L-glutamine + H2O = L-glutamate + NH4(+). The catalysed reaction is UTP + NH4(+) + ATP = CTP + ADP + phosphate + 2 H(+). The protein operates within pyrimidine metabolism; CTP biosynthesis via de novo pathway; CTP from UDP: step 2/2. Allosterically activated by GTP, when glutamine is the substrate; GTP has no effect on the reaction when ammonia is the substrate. The allosteric effector GTP functions by stabilizing the protein conformation that binds the tetrahedral intermediate(s) formed during glutamine hydrolysis. Inhibited by the product CTP, via allosteric rather than competitive inhibition. Catalyzes the ATP-dependent amination of UTP to CTP with either L-glutamine or ammonia as the source of nitrogen. Regulates intracellular CTP levels through interactions with the four ribonucleotide triphosphates. In Synechococcus sp. (strain ATCC 27144 / PCC 6301 / SAUG 1402/1) (Anacystis nidulans), this protein is CTP synthase.